Here is a 397-residue protein sequence, read N- to C-terminus: Acetate kinase (397 aa).

Residue asparagine 8 coordinates Mg(2+). Lysine 15 contacts ATP. Arginine 89 provides a ligand contact to substrate. The active-site Proton donor/acceptor is aspartate 146. Residues 206-210, 281-283, and 329-333 each bind ATP; these read HLGNG, DLR, and GVGEN. A Mg(2+)-binding site is contributed by glutamate 382.

The protein belongs to the acetokinase family. In terms of assembly, homodimer. Requires Mg(2+) as cofactor. Mn(2+) serves as cofactor.

Its subcellular location is the cytoplasm. It catalyses the reaction acetate + ATP = acetyl phosphate + ADP. Its pathway is metabolic intermediate biosynthesis; acetyl-CoA biosynthesis; acetyl-CoA from acetate: step 1/2. Catalyzes the formation of acetyl phosphate from acetate and ATP. Can also catalyze the reverse reaction. The protein is Acetate kinase of Bacillus anthracis.